A 66-amino-acid polypeptide reads, in one-letter code: VRDGYIVDDKNCTFFCGRNAYCNDECKKKGGESGYCQWASPYGNACWCYKLPDRVPIKEKGRCNGR.

One can recognise an LCN-type CS-alpha/beta domain in the interval 2-64 (RDGYIVDDKN…VPIKEKGRCN (63 aa)). Cystine bridges form between cysteine 12-cysteine 63, cysteine 16-cysteine 36, cysteine 22-cysteine 46, and cysteine 26-cysteine 48. Residue asparagine 64 is modified to Asparagine amide. A propeptide spanning residues 65 to 66 (GR) is cleaved from the precursor.

Belongs to the long (4 C-C) scorpion toxin superfamily. Sodium channel inhibitor family. Alpha subfamily. In terms of tissue distribution, expressed by the venom gland.

The protein localises to the secreted. Alpha toxins bind voltage-independently at site-3 of sodium channels (Nav) and inhibit the inactivation of the activated channels, thereby blocking neuronal transmission. This is Sodium channel alpha-toxin Acra8 from Androctonus crassicauda (Arabian fat-tailed scorpion).